Consider the following 62-residue polypeptide: Enterocin E-760 (62 aa).

It is found in the secreted. Functionally, bacteriocin active against the Gram-negative bacteria S.enteritidis, S.choleraesuis, S.typhimurium, S.gallinarum, E.coli O157:H7, Y.enterocolitica, C.freundii, K.pneumoniae, S.dysentriae, P.aeruginosa, P.mirabilis, M.morganii, C.jejuni and 20 other Campylobacter isolates, and the Gram-positive bacteria S.aureus, S.epidermidis and L.monocytogenes. This Enterococcus sp protein is Enterocin E-760.